Here is a 470-residue protein sequence, read N- to C-terminus: 5-hydroxytryptamine receptor 2A (470 aa).

Residues 1-23 form a disordered region; it reads MDVLFEDNAPLSPTTSSLMPSNG. At 1–80 the chain is on the extracellular side; sequence MDVLFEDNAP…LQEKNWSALL (80 aa). Residues 10–21 show a composition bias toward low complexity; sequence PLSPTTSSLMPS. 4 N-linked (GlcNAc...) asparagine glycosylation sites follow: Asn-38, Asn-44, Asn-51, and Asn-54. Residues 81–97 form a helical membrane-spanning segment; the sequence is TAVVIILTIAGNILVIM. Over 98–111 the chain is Cytoplasmic; that stretch reads AVSLEKKLQNATNY. Residues 112–137 traverse the membrane as a helical segment; the sequence is FLMSLAIADMLLGFLVMPVSMLTILY. Residues 138-146 are Extracellular-facing; it reads GYRWPLPSK. The chain crosses the membrane as a helical span at residues 147–171; sequence LCAVWIYLDVLFSTASIMHLCAISL. A disulfide bridge connects residues Cys-148 and Cys-227. Asp-155 is a binding site for serotonin. The DRY motif; important for ligand-induced conformation changes motif lies at 172 to 174; the sequence is DRY. Topologically, residues 172-191 are cytoplasmic; sequence DRYVAIQNPIHHSRFNSRTK. The helical transmembrane segment at 192-215 threads the bilayer; that stretch reads AFLKIIAVWTISVGISMPIPVFGL. Residues 216–232 lie on the Extracellular side of the membrane; that stretch reads QDDSKVFKEGSCLLADD. The chain crosses the membrane as a helical span at residues 233-258; the sequence is NFVLIGSFVSFFIPLTIMVITYFLTI. The Cytoplasmic portion of the chain corresponds to 259 to 321; sequence KSLQKEATLC…QSISNEQKAC (63 aa). Ser-280 is subject to Phosphoserine. The chain crosses the membrane as a helical span at residues 322–347; the sequence is KVLGIVFFLFVVMWCPFFITNIMAVI. Asn-342 lines the serotonin pocket. A disulfide bridge links Cys-348 with Cys-352. The Extracellular portion of the chain corresponds to 348 to 355; sequence CKESCNED. The helical transmembrane segment at 356–381 threads the bilayer; the sequence is IIGALLNVFVWIGYLSSAVNPLVYTL. An NPxxY motif; important for ligand-induced conformation changes and signaling motif is present at residues 375 to 379; the sequence is NPLVY. The Cytoplasmic segment spans residues 382–470; the sequence is FNKTYRSAFS…NTVNEKVSCV (89 aa). Residues 468–470 carry the PDZ-binding motif; the sequence is SCV.

It belongs to the G-protein coupled receptor 1 family. In terms of assembly, interacts (via C-terminus) with MPDZ and PATJ. May interact (via C-terminus) with MPP3, PRDX6, DLG4, DLG1, CASK, APBA1 and MAGI2. Interacts with GRM2 and DRD2; this may affect signaling. As to expression, ubiquitous.

Its subcellular location is the cell membrane. It localises to the cell projection. It is found in the dendrite. The protein resides in the axon. The protein localises to the cytoplasmic vesicle. Its subcellular location is the membrane. It localises to the caveola. It is found in the presynapse. Its activity is regulated as follows. G-protein coupled receptor activity is regulated by lipids: oleamide increases HTR2A-mediated activity. Functionally, G-protein coupled receptor for 5-hydroxytryptamine (serotonin). Also functions as a receptor for various drugs and psychoactive substances, including mescaline, psilocybin, 1-(2,5-dimethoxy-4-iodophenyl)-2-aminopropane (DOI) and lysergic acid diethylamide (LSD). Ligand binding causes a conformation change that triggers signaling via guanine nucleotide-binding proteins (G proteins) and modulates the activity of downstream effectors. HTR2A is coupled to G(q)/G(11) G alpha proteins and activates phospholipase C-beta, releasing diacylglycerol (DAG) and inositol 1,4,5-trisphosphate (IP3) second messengers that modulate the activity of phosphatidylinositol 3-kinase and promote the release of Ca(2+) ions from intracellular stores, respectively. Beta-arrestin family members inhibit signaling via G proteins and mediate activation of alternative signaling pathways. Affects neural activity, perception, cognition and mood. Plays a role in the regulation of behavior, including responses to anxiogenic situations and psychoactive substances. Plays a role in intestinal smooth muscle contraction, and may play a role in arterial vasoconstriction. The chain is 5-hydroxytryptamine receptor 2A (HTR2A) from Canis lupus familiaris (Dog).